We begin with the raw amino-acid sequence, 348 residues long: Protein RecA (348 aa).

64–71 is an ATP binding site; the sequence is GPESSGKT. A compositionally biased stretch (basic and acidic residues) spans 325–335; that stretch reads YEIDGSSKEPL. Residues 325 to 348 are disordered; sequence YEIDGSSKEPLDEKEETLSLLDDE.

It belongs to the RecA family.

The protein resides in the cytoplasm. In terms of biological role, can catalyze the hydrolysis of ATP in the presence of single-stranded DNA, the ATP-dependent uptake of single-stranded DNA by duplex DNA, and the ATP-dependent hybridization of homologous single-stranded DNAs. It interacts with LexA causing its activation and leading to its autocatalytic cleavage. This chain is Protein RecA, found in Listeria monocytogenes serotype 1/2a (strain 10403S).